The following is a 364-amino-acid chain: tRNA 2-selenouridine synthase (364 aa).

Positions 14 to 137 (LLADTPLIDV…LRQTAIQATW (124 aa)) constitute a Rhodanese domain. Cys-97 serves as the catalytic S-selanylcysteine intermediate.

It belongs to the SelU family. Monomer.

It carries out the reaction 5-methylaminomethyl-2-thiouridine(34) in tRNA + selenophosphate + (2E)-geranyl diphosphate + H2O + H(+) = 5-methylaminomethyl-2-selenouridine(34) in tRNA + (2E)-thiogeraniol + phosphate + diphosphate. It catalyses the reaction 5-methylaminomethyl-2-thiouridine(34) in tRNA + (2E)-geranyl diphosphate = 5-methylaminomethyl-S-(2E)-geranyl-thiouridine(34) in tRNA + diphosphate. The catalysed reaction is 5-methylaminomethyl-S-(2E)-geranyl-thiouridine(34) in tRNA + selenophosphate + H(+) = 5-methylaminomethyl-2-(Se-phospho)selenouridine(34) in tRNA + (2E)-thiogeraniol. The enzyme catalyses 5-methylaminomethyl-2-(Se-phospho)selenouridine(34) in tRNA + H2O = 5-methylaminomethyl-2-selenouridine(34) in tRNA + phosphate. Its function is as follows. Involved in the post-transcriptional modification of the uridine at the wobble position (U34) of tRNA(Lys), tRNA(Glu) and tRNA(Gln). Catalyzes the conversion of 2-thiouridine (S2U-RNA) to 2-selenouridine (Se2U-RNA). Acts in a two-step process involving geranylation of 2-thiouridine (S2U) to S-geranyl-2-thiouridine (geS2U) and subsequent selenation of the latter derivative to 2-selenouridine (Se2U) in the tRNA chain. This chain is tRNA 2-selenouridine synthase, found in Salmonella enteritidis.